A 250-amino-acid chain; its full sequence is Nuclear transcription factor Y subunit C-4 (250 aa).

Over residues 1–10 (MDNNNNNNNQ) the composition is skewed to low complexity. Disordered regions lie at residues 1 to 35 (MDNN…PSGS) and 209 to 250 (GVYA…DSQG). A compositionally biased stretch (polar residues) spans 214-225 (PPSQAWQSVWQN). Residues 227–242 (AGGGDDVSYGSGGSSG) show a composition bias toward gly residues.

This sequence belongs to the NFYC/HAP5 subunit family. In terms of assembly, heterotrimeric transcription factor composed of three components, NF-YA, NF-YB and NF-YC. NF-YB and NF-YC must interact and dimerize for NF-YA association and DNA binding. In terms of tissue distribution, ubiquitous. Present in etiolated seedlings.

The protein localises to the nucleus. Its function is as follows. Stimulates the transcription of various genes by recognizing and binding to a CCAAT motif in promoters. Involved in the abscisic acid (ABA) signaling pathway. The sequence is that of Nuclear transcription factor Y subunit C-4 (NFYC4) from Arabidopsis thaliana (Mouse-ear cress).